We begin with the raw amino-acid sequence, 156 residues long: 6,7-dimethyl-8-ribityllumazine synthase (156 aa).

5-amino-6-(D-ribitylamino)uracil contacts are provided by residues phenylalanine 23, 57 to 59, and 81 to 83; these read AFE and TVI. 86–87 provides a ligand contact to (2S)-2-hydroxy-3-oxobutyl phosphate; sequence ST. Residue histidine 89 is the Proton donor of the active site. 5-amino-6-(D-ribitylamino)uracil is bound at residue phenylalanine 114. Arginine 128 contacts (2S)-2-hydroxy-3-oxobutyl phosphate.

The protein belongs to the DMRL synthase family. As to quaternary structure, forms an icosahedral capsid composed of 60 subunits, arranged as a dodecamer of pentamers.

It catalyses the reaction (2S)-2-hydroxy-3-oxobutyl phosphate + 5-amino-6-(D-ribitylamino)uracil = 6,7-dimethyl-8-(1-D-ribityl)lumazine + phosphate + 2 H2O + H(+). The protein operates within cofactor biosynthesis; riboflavin biosynthesis; riboflavin from 2-hydroxy-3-oxobutyl phosphate and 5-amino-6-(D-ribitylamino)uracil: step 1/2. Its function is as follows. Catalyzes the formation of 6,7-dimethyl-8-ribityllumazine by condensation of 5-amino-6-(D-ribitylamino)uracil with 3,4-dihydroxy-2-butanone 4-phosphate. This is the penultimate step in the biosynthesis of riboflavin. The sequence is that of 6,7-dimethyl-8-ribityllumazine synthase from Shouchella clausii (strain KSM-K16) (Alkalihalobacillus clausii).